Reading from the N-terminus, the 1338-residue chain is Protein dispatched homolog 3 (1338 aa).

At 1-67 (MDTEDDPLLQ…VGWIFTNPYC (67 aa)) the chain is on the cytoplasmic side. A helical transmembrane segment spans residues 68–88 (AGFILFLGCAIPAVLAVVMFL). Topologically, residues 89-406 (HYPALDIDIS…YEVRRTFNND (318 aa)) are lumenal. Residues 164-196 (TRAKRSAPQGRTSSPEPRAHPHPGNETSRVTRG) are disordered. The SSD domain occupies 401–559 (RTFNNDMLLA…LFTMPAALGI (159 aa)). Residues 407-427 (MLLAFISSSCIAVLVYILTSC) traverse the membrane as a helical segment. Serine 428 is a topological domain (cytoplasmic). A helical transmembrane segment spans residues 429-449 (VFLSFFGIASIGLSCLVALFL). Topologically, residues 450-452 (YHV) are lumenal. The chain crosses the membrane as a helical span at residues 453-473 (VFGIQYLGILNGVAAFVIVGI). The Cytoplasmic segment spans residues 474 to 517 (GVDDVFVFINTYRQATHLKDLRLRMIHTIQTAGKATFFTSLTTA). A helical transmembrane segment spans residues 518 to 538 (AAYAANIFSQIPAVHDFGLFM). Position 539 (serine 539) is a topological domain, lumenal. Residues 540–560 (LIVSCCWVAVLFTMPAALGIW) form a helical membrane-spanning segment. The Cytoplasmic portion of the chain corresponds to 561 to 672 (TLYVSPLESS…WVLWSAVKSR (112 aa)). A helical transmembrane segment spans residues 673 to 693 (WVIVGLFLLVLLLSIFFASRL). Residues 694 to 1128 (RPASRAPVLF…IFMEIIGVQS (435 aa)) lie on the Lumenal side of the membrane. A disordered region spans residues 747-768 (SLEKKKRGSASPWGSKGSISDT). A helical transmembrane segment spans residues 1129–1149 (ALYGLILSLVICVAAVAVFTT). Position 1150 (histidine 1150) is a topological domain, cytoplasmic. A helical transmembrane segment spans residues 1151–1171 (ILLLLPVLLSILGVVCLVVTI). Over 1172–1237 (MYWSGWEMGA…TIEAIRHVGV (66 aa)) the chain is Lumenal. Residues 1238–1258 (AIVSSAVTTVIATVPLFFCII) traverse the membrane as a helical segment. Topologically, residues 1259–1266 (APFAKFGK) are cytoplasmic. A helical membrane pass occupies residues 1267–1287 (IVALNTGVSILYTLTVSTALL). The Lumenal portion of the chain corresponds to 1288 to 1302 (SIMGPGTFTRSRTSC). A helical membrane pass occupies residues 1303–1323 (LKAVAGVLLAGLLGLCICLAL). Over 1324-1338 (LKGGFKIPLPNGTAL) the chain is Cytoplasmic.

Belongs to the patched family. In terms of tissue distribution, expressed in retina, hippocampus and cerebellum. Expressed in the ganglion and bipolar cells of the inner and outer nuclear layers of the retina and in Purkinje cells (at protein level). Expressed strongly in brain and retina, weakly in testis and bone marrow.

The protein localises to the endoplasmic reticulum membrane. The protein resides in the nucleus membrane. Its subcellular location is the cytoplasmic vesicle membrane. Plays a role in neuronal proliferation and differentiation. Plays a role in the accumulation of cellular cholesterol. Involved in intracellular lipid droplet formation. May contribute to cholesterol homeostasis in neuronal cells. The sequence is that of Protein dispatched homolog 3 from Gallus gallus (Chicken).